Here is a 390-residue protein sequence, read N- to C-terminus: GTPase Obg (390 aa).

The Obg domain occupies 1–159 (MKFIDEALIR…RDLQLELMLL (159 aa)). The OBG-type G domain maps to 160–333 (ADVGMLGLPN…LCRDIMDFIE (174 aa)). Residues 166–173 (GLPNAGKS), 191–195 (FTTLV), 213–216 (DIPG), 283–286 (NKID), and 314–316 (SAV) contribute to the GTP site. Residues Ser-173 and Thr-193 each coordinate Mg(2+). Residues 363–390 (DHQFEDEDEDWDDWSEEDEEGVETIYKP) are disordered. Acidic residues predominate over residues 366–384 (FEDEDEDWDDWSEEDEEGV).

The protein belongs to the TRAFAC class OBG-HflX-like GTPase superfamily. OBG GTPase family. Monomer. The cofactor is Mg(2+).

It localises to the cytoplasm. Its function is as follows. An essential GTPase which binds GTP, GDP and possibly (p)ppGpp with moderate affinity, with high nucleotide exchange rates and a fairly low GTP hydrolysis rate. Plays a role in control of the cell cycle, stress response, ribosome biogenesis and in those bacteria that undergo differentiation, in morphogenesis control. The sequence is that of GTPase Obg from Pasteurella multocida (strain Pm70).